Here is a 113-residue protein sequence, read N- to C-terminus: MPKKERKVEGDEVIRVPLPEGNQLFGVVEQALGAGWMDVRCEDGKIRRCRIPGKLRRRVWIRVGDLVIVQPWPVQSDKRGDIVYRYTQTQVDWLLRKGKITQEFLTGGSLLVE.

The region spanning 12–87 (EVIRVPLPEG…KRGDIVYRYT (76 aa)) is the S1-like domain.

It belongs to the eIF-1A family.

Functionally, seems to be required for maximal rate of protein biosynthesis. Enhances ribosome dissociation into subunits and stabilizes the binding of the initiator Met-tRNA(I) to 40 S ribosomal subunits. This Pyrococcus abyssi (strain GE5 / Orsay) protein is Translation initiation factor 1A (eIF1A).